Here is a 107-residue protein sequence, read N- to C-terminus: Age-related maculopathy susceptibility protein 2 (107 aa).

The interval 1-21 (MLRLYPGPMVTEAEGKGGPEM) is disordered.

In terms of tissue distribution, detected in retina and placenta.

Its subcellular location is the cytoplasm. The chain is Age-related maculopathy susceptibility protein 2 (ARMS2) from Homo sapiens (Human).